We begin with the raw amino-acid sequence, 526 residues long: ATP synthase subunit alpha (526 aa).

171–178 is a binding site for ATP; sequence GDRQTGKT.

This sequence belongs to the ATPase alpha/beta chains family. F-type ATPases have 2 components, CF(1) - the catalytic core - and CF(0) - the membrane proton channel. CF(1) has five subunits: alpha(3), beta(3), gamma(1), delta(1), epsilon(1). CF(0) has four main subunits: a(1), b(1), b'(1) and c(9-12).

It localises to the cell inner membrane. It carries out the reaction ATP + H2O + 4 H(+)(in) = ADP + phosphate + 5 H(+)(out). In terms of biological role, produces ATP from ADP in the presence of a proton gradient across the membrane. The alpha chain is a regulatory subunit. This chain is ATP synthase subunit alpha, found in Chlorobium phaeovibrioides (strain DSM 265 / 1930) (Prosthecochloris vibrioformis (strain DSM 265)).